The chain runs to 364 residues: MPLVPPHVASLTPYVPGKPIEEVEREYGVSNVAKLASNENALGPSPLALAAAREACAKVHLYPDGSAYLLRNAIAAKLGVPPEEVMVGNGSNELIELLVRTFVLDGEEVLTSAQSFVAYKLAAHEHGRTLVEAPMKGRFHYDLDALRKLLSRRTKLVFLANPDNPTGTWFTEAELTPFLDAVPKDTLVVLDEAYVEYVDAPGFQDGLALRRKYPNVVVLRTFSKIYGLAGMRLGYGLARPEVVEYVDRVRPPFNTNLVAQAAGAAALGDSAHVAKSRALVLEERPFLAKGLAALGAIVVPSQGNFVLADFPGRTGKDLFEALLREGVIARPVAGYGFPSALRITVGLRRENERCLAALGRILGA.

The residue at position 224 (Lys224) is an N6-(pyridoxal phosphate)lysine.

The protein belongs to the class-II pyridoxal-phosphate-dependent aminotransferase family. Histidinol-phosphate aminotransferase subfamily. As to quaternary structure, homodimer. It depends on pyridoxal 5'-phosphate as a cofactor.

It carries out the reaction L-histidinol phosphate + 2-oxoglutarate = 3-(imidazol-4-yl)-2-oxopropyl phosphate + L-glutamate. The protein operates within amino-acid biosynthesis; L-histidine biosynthesis; L-histidine from 5-phospho-alpha-D-ribose 1-diphosphate: step 7/9. This is Histidinol-phosphate aminotransferase from Anaeromyxobacter sp. (strain Fw109-5).